The chain runs to 555 residues: Energy-dependent translational throttle protein EttA (555 aa).

ABC transporter domains lie at 6-259 and 324-550; these read YTMH…AQEA and LEVS…RIKY. An ATP-binding site is contributed by 39 to 46; sequence GLNGAGKS. Residues 95 to 139 are arm; that stretch reads SEVVNALKRLDEVYALYADPDADFDKLAAEQGRLEEIIQAHDGHN. The segment at 242 to 322 is ptIM; the sequence is GNYSSWLEQK…IPPGPRLGDK (81 aa). 356–363 contributes to the ATP binding site; that stretch reads GPNGAGKS.

Belongs to the ABC transporter superfamily. ABCF family. Translational throttle EttA subfamily. In terms of assembly, monomer. Probably contacts ribosomal proteins L1, L5, L33 and S7, the 16S and 23S rRNA and the P-site containing tRNA(fMet).

The protein resides in the cytoplasm. It carries out the reaction ATP + H2O = ADP + phosphate + H(+). Functionally, a translation factor that gates the progression of the 70S ribosomal initiation complex (IC, containing tRNA(fMet) in the P-site) into the translation elongation cycle by using a mechanism sensitive to the ATP/ADP ratio. Binds to the 70S ribosome E-site where it modulates the state of the translating ribosome during subunit translocation. ATP hydrolysis probably frees it from the ribosome, which can enter the elongation phase. The chain is Energy-dependent translational throttle protein EttA from Escherichia coli O6:H1 (strain CFT073 / ATCC 700928 / UPEC).